The chain runs to 122 residues: Large ribosomal subunit protein uL14 (122 aa).

It belongs to the universal ribosomal protein uL14 family. In terms of assembly, part of the 50S ribosomal subunit. Forms a cluster with proteins L3 and L19. In the 70S ribosome, L14 and L19 interact and together make contacts with the 16S rRNA in bridges B5 and B8.

Functionally, binds to 23S rRNA. Forms part of two intersubunit bridges in the 70S ribosome. This is Large ribosomal subunit protein uL14 from Phenylobacterium zucineum (strain HLK1).